The chain runs to 304 residues: ATP synthase gamma chain (304 aa).

The protein belongs to the ATPase gamma chain family. In terms of assembly, F-type ATPases have 2 components, CF(1) - the catalytic core - and CF(0) - the membrane proton channel. CF(1) has five subunits: alpha(3), beta(3), gamma(1), delta(1), epsilon(1). CF(0) has three main subunits: a, b and c.

It is found in the cell membrane. Functionally, produces ATP from ADP in the presence of a proton gradient across the membrane. The gamma chain is believed to be important in regulating ATPase activity and the flow of protons through the CF(0) complex. This chain is ATP synthase gamma chain, found in Thermobifida fusca (strain YX).